Reading from the N-terminus, the 877-residue chain is Phosphoenolpyruvate carboxylase (877 aa).

Catalysis depends on residues H138 and K544.

It belongs to the PEPCase type 1 family. Mg(2+) serves as cofactor.

It carries out the reaction oxaloacetate + phosphate = phosphoenolpyruvate + hydrogencarbonate. Its function is as follows. Forms oxaloacetate, a four-carbon dicarboxylic acid source for the tricarboxylic acid cycle. The protein is Phosphoenolpyruvate carboxylase of Vibrio vulnificus (strain CMCP6).